Reading from the N-terminus, the 1034-residue chain is Teashirt homolog 2 (1034 aa).

The disordered stretch occupies residues 1-90; the sequence is MPRRKQQAPK…NESLLSDASD (90 aa). The stretch at 13-38 forms a coiled coil; that stretch reads AGYAQEEQLKEEEEIKEEEEEEDSGS. Positions 21–36 are enriched in acidic residues; that stretch reads LKEEEEIKEEEEEEDS. Residues 65–90 are compositionally biased toward polar residues; sequence SYQNSPGSHLSNQDAENESLLSDASD. A Glycyl lysine isopeptide (Lys-Gly) (interchain with G-Cter in SUMO2) cross-link involves residue K188. 2 consecutive C2H2-type zinc fingers follow at residues 215 to 239 and 275 to 299; these read FRCRQCSAAYDTLVELTVHMNETGH and LKCMFCGDSFDSLQDLSVHMIKTKH. The segment at 239–265 is disordered; it reads HYQDDNRKKDKLRPTSYSKPRKRAFQD. Residues K306 and K315 each participate in a glycyl lysine isopeptide (Lys-Gly) (interchain with G-Cter in SUMO2) cross-link. Residues 380–404 form a C2H2-type 3; atypical zinc finger; that stretch reads LKCMECGSSHDTLQQLTTHMMVTGH. A Glycyl lysine isopeptide (Lys-Gly) (interchain with G-Cter in SUMO2) cross-link involves residue K417. Polar residues predominate over residues 432–455; sequence LSEAPNSDSLAPKPSSNSASDCTA. Residues 432 to 496 form a disordered region; sequence LSEAPNSDSL…PLQKPLDPTI (65 aa). Residues 459 to 482 show a composition bias toward basic and acidic residues; it reads ELKKESKKERPEETSKDEKVVKSE. Glycyl lysine isopeptide (Lys-Gly) (interchain with G-Cter in SUMO2) cross-links involve residues K461, K480, K497, K601, and K652. Disordered regions lie at residues 598–676 and 763–789; these read TQVK…TSAL and QPIDLTKSKSKKAESSQAQSCMSPPQK. Residues 600-668 are compositionally biased toward basic and acidic residues; sequence VKKESEDKDE…KEGSEKEKPQ (69 aa). Glycyl lysine isopeptide (Lys-Gly) (interchain with G-Cter in SUMO2) cross-links involve residues K800 and K820. Residues 841–911 constitute a DNA-binding region (homeobox; atypical); the sequence is RKGRQSNWNP…NVKYQLRKTG (71 aa). The C2H2-type 4 zinc finger occupies 926 to 948; the sequence is FYCSDCASQFRTPSTYISHLESH. Residue K966 forms a Glycyl lysine isopeptide (Lys-Gly) (interchain with G-Cter in SUMO2) linkage. S980 is subject to Phosphoserine. The C2H2-type 5 zinc finger occupies 994–1017; it reads FKCKLCCRTFVSKHAVKLHLSKTH. Residues 1014-1034 form a disordered region; sequence SKTHSKSPEHHSQFVTDVDEE.

It belongs to the teashirt C2H2-type zinc-finger protein family. As to quaternary structure, interacts (via homeobox domain) with APBB1 (via PID domain 1). Post-translationally, sumoylated. In terms of tissue distribution, expressed in brain; strongly reduced in post-mortem elderly subjects with Alzheimer disease.

The protein localises to the nucleus. Probable transcriptional regulator involved in developmental processes. May act as a transcriptional repressor (Potential). The protein is Teashirt homolog 2 (TSHZ2) of Homo sapiens (Human).